A 360-amino-acid chain; its full sequence is Tryptophan--tRNA ligase, mitochondrial (360 aa).

The N-terminal 18 residues, 1-18 (MALFSVRKARECWRFIRA), are a transit peptide targeting the mitochondrion. Residues Gln42 and 48-51 (HLGN) contribute to the ATP site. L-tryptophan is bound at residue Asp167. ATP-binding positions include 179–181 (GED), Val217, and 226–230 (KMSKS).

This sequence belongs to the class-I aminoacyl-tRNA synthetase family.

The protein localises to the mitochondrion matrix. Its subcellular location is the mitochondrion. It carries out the reaction tRNA(Trp) + L-tryptophan + ATP = L-tryptophyl-tRNA(Trp) + AMP + diphosphate + H(+). Its function is as follows. Catalyzes the attachment of tryptophan to tRNA(Trp) in a two-step reaction: tryptophan is first activated by ATP to form Trp-AMP and then transferred to the acceptor end of tRNA(Trp). This is Tryptophan--tRNA ligase, mitochondrial (Wars2) from Mus musculus (Mouse).